The sequence spans 28 residues: Chassatide C11 (28 aa).

3 disulfide bridges follow: Cys3/Cys19, Cys7/Cys21, and Cys12/Cys26. Methionine sulfoxide; in form chassatide chaC11A is present on Met16.

It belongs to the cyclotide family. Bracelet subfamily. In terms of tissue distribution, expressed in fruit, pedicel and stem but not in leaf and root (at protein level).

Functionally, chassatide C11: Probably participates in a plant defense mechanism. Active against E.coli ATCC 25922 (MIC=8.5 uM) but not against S.aureus ATCC 12600 or S.epidermidis ATCC 14990. Has cytotoxic and hemolytic activity. Chassatide C11A: Probably participates in a plant defense mechanism. Has no activity against bacteria up to a concentration of 80 uM. Has no cytotoxic and no hemolytic activity. In Chassalia chartacea (Chassalia curviflora), this protein is Chassatide C11.